We begin with the raw amino-acid sequence, 1096 residues long: Phospholipase D zeta 1 (1096 aa).

The residue at position 2 (Ala2) is an N-acetylalanine. The 155-residue stretch at 50-204 (PKAVIVSVSR…REVCRFLEVS (155 aa)) folds into the PX domain. The tract at residues 131–152 (VQDEDADEVPLHQDESAKNRDV) is disordered. Over residues 139–151 (VPLHQDESAKNRD) the composition is skewed to basic and acidic residues. A PH domain is found at 234-342 (DDSNRCCGCC…WVASINDAAL (109 aa)). The region spanning 477–504 (YLWSHHEKLVIVDNQVCFIGGLDLCFGR) is the PLD phosphodiesterase 1 domain. Active-site residues include His482, Lys484, and Asp489. Positions 607-632 (GRQEESDIESKKEEDSIRGIRRDDSF) are enriched in basic and acidic residues. Residues 607–691 (GRQEESDIES…DGDTPMRGFV (85 aa)) form a disordered region. Residues 892–919 (SQVYVHSKIMIVDDRAALIGSANINDRS) form the PLD phosphodiesterase 2 domain. Residues His897, Lys899, and Asp904 contribute to the active site.

It belongs to the phospholipase D family. PXPH-PLD subfamily. Does not require Ca(2+) or any other cation for activity. serves as cofactor. Expressed in inflorescences, flowers, siliques, stems, leaves, and roots. Highest expression in roots.

The protein localises to the cytoplasmic vesicle. The catalysed reaction is a 1,2-diacyl-sn-glycero-3-phosphocholine + H2O = a 1,2-diacyl-sn-glycero-3-phosphate + choline + H(+). With respect to regulation, calcium-independent and PIP2-dependent. In terms of biological role, hydrolyzes glycerol-phospholipids at the terminal phosphodiesteric bond to generate phosphatidic acids (PA). Phosphatidylcholine-selective. Regulates root-hair morphogenesis. Contributes to the supply of inorganic phosphorus for cell metabolism and diacylglycerol moieties for galactolipid synthesis in phosphorus-starved roots. Involved in root elongation during phosphate limitation. In Arabidopsis thaliana (Mouse-ear cress), this protein is Phospholipase D zeta 1.